The chain runs to 327 residues: MITVGIDHGTSGIKVCIKNNDKTITTYFKMSRTELKNKSFLGELNKYENLRDIDLIAMGYSMGDGINEILPIEKVENRGVINIEGVGEKVGGGTKMYDEIKNSNIPTVVIPGLHKNIECIDARFRALYSHMASPEKISIAYCAYKTYGFNNFILSDISSNTVSLLIKDKKLFGGFDACIGAPGLLHGAIDLEMIRDIDSNKITANEAFSTAGVIKVVIDKYKGVENTKEEILKNYKTDEKCKLAIDTLILSVAMEINSLMFLNPDKNIVLAGSIATTKEYNLVDKLKEYIKGNIYILEGESGALGGALIAEDILNGKKDILGIPVNI.

It belongs to the UPF0285 family.

This chain is UPF0285 protein Maeo_0978, found in Methanococcus aeolicus (strain ATCC BAA-1280 / DSM 17508 / OCM 812 / Nankai-3).